Reading from the N-terminus, the 288-residue chain is MFNFGSKILVLFLVAFPCGLISFGRVSADSESAEDIFPDSTVDEEEEEEEDEVLVEEDQVPGSETEDDIDEDAAVGDVTSHPDADTTIVFVTGEEFPANEIVKFLVGFTNKGSQDFTVHSLEASFRYPQDFQFYIQNFTALPLSTVVQPQKQASFEYSFIPAQPMAGRPFGLVILLNYQDSEGNGFQTAIYNQTVTIVELEEGLDGETIFMYIFLTGLVVLAVFGMYQVLESRTRKRFPVKVETGTGGMNGVDISWIPQETLNIMSKASASPKASPRKRTKRAVGVDQ.

The signal sequence occupies residues 1–28 (MFNFGSKILVLFLVAFPCGLISFGRVSA). The Lumenal segment spans residues 29-208 (DSESAEDIFP…ELEEGLDGET (180 aa)). The interval 34 to 69 (EDIFPDSTVDEEEEEEEDEVLVEEDQVPGSETEDDI) is disordered. Asparagine 137 and asparagine 192 each carry an N-linked (GlcNAc...) asparagine glycan. A helical membrane pass occupies residues 209–229 (IFMYIFLTGLVVLAVFGMYQV). Topologically, residues 230–288 (LESRTRKRFPVKVETGTGGMNGVDISWIPQETLNIMSKASASPKASPRKRTKRAVGVDQ) are cytoplasmic. The tract at residues 267 to 288 (KASASPKASPRKRTKRAVGVDQ) is disordered.

This sequence belongs to the TRAP-alpha family. Heterotetramer of TRAP-alpha, TRAP-beta, TRAP-delta and TRAP-gamma. Post-translationally, phosphorylated in its cytoplasmic tail.

The protein resides in the endoplasmic reticulum membrane. In terms of biological role, TRAP proteins are part of a complex whose function is to bind calcium to the ER membrane and thereby regulate the retention of ER resident proteins. May be involved in the recycling of the translocation apparatus after completion of the translocation process or may function as a membrane-bound chaperone facilitating folding of translocated proteins. This Oncorhynchus mykiss (Rainbow trout) protein is Translocon-associated protein subunit alpha (ssr1).